The primary structure comprises 88 residues: Small ribosomal subunit protein bS20 (88 aa).

2 disordered regions span residues 1-29 (MANT…SKLR) and 69-88 (KNTA…AMAA).

Belongs to the bacterial ribosomal protein bS20 family.

In terms of biological role, binds directly to 16S ribosomal RNA. This chain is Small ribosomal subunit protein bS20, found in Polynucleobacter asymbioticus (strain DSM 18221 / CIP 109841 / QLW-P1DMWA-1) (Polynucleobacter necessarius subsp. asymbioticus).